The following is a 71-amino-acid chain: Small ribosomal subunit protein bS21 (71 aa).

It belongs to the bacterial ribosomal protein bS21 family.

This chain is Small ribosomal subunit protein bS21, found in Buchnera aphidicola subsp. Baizongia pistaciae (strain Bp).